Reading from the N-terminus, the 243-residue chain is Glutathione S-transferase omega-2 (243 aa).

The region spanning 22–101 is the GST N-terminal domain; that stretch reads GLIRIYSMRF…YLDDAYPGRK (80 aa). The Nucleophile role is filled by C32. Glutathione is bound by residues K59, I72, and 85–86; that span reads ES. The 126-residue stretch at 106–231 folds into the GST C-terminal domain; the sequence is DPYERARQKM…IFQGFLNLYF (126 aa).

Belongs to the GST superfamily. Omega family. In terms of tissue distribution, expressed in a range of tissues, including the liver, kidney, skeletal muscle and prostate. Strongest expression in the testis.

It catalyses the reaction RX + glutathione = an S-substituted glutathione + a halide anion + H(+). The enzyme catalyses L-dehydroascorbate + 2 glutathione = glutathione disulfide + L-ascorbate. It carries out the reaction methylarsonate + 2 glutathione + H(+) = methylarsonous acid + glutathione disulfide + H2O. Exhibits glutathione-dependent thiol transferase activity. Has high dehydroascorbate reductase activity and may contribute to the recycling of ascorbic acid. Participates in the biotransformation of inorganic arsenic and reduces monomethylarsonic acid (MMA). In Homo sapiens (Human), this protein is Glutathione S-transferase omega-2 (GSTO2).